The primary structure comprises 745 residues: Polyribonucleotide nucleotidyltransferase (745 aa).

Aspartate 487 and aspartate 493 together coordinate Mg(2+). Positions 554–613 constitute a KH domain; the sequence is PSSTTVKIDKDKIKDIIGPGGKIIKEICETSNAKIDISDDGTVSIYASDRDKIKIALDKI. One can recognise an S1 motif domain in the interval 623–691; the sequence is GEIFNGTVMK…NKGKAKLTIK (69 aa). The segment at 693-732 is disordered; it reads AYKDHSSNNTKQKNNVKDDSESEQRRDTSKKRTWNEDNNT. Basic and acidic residues predominate over residues 707 to 719; the sequence is NVKDDSESEQRRD.

It belongs to the polyribonucleotide nucleotidyltransferase family. Mg(2+) serves as cofactor.

It localises to the cytoplasm. The catalysed reaction is RNA(n+1) + phosphate = RNA(n) + a ribonucleoside 5'-diphosphate. Involved in mRNA degradation. Catalyzes the phosphorolysis of single-stranded polyribonucleotides processively in the 3'- to 5'-direction. This Rickettsia prowazekii (strain Madrid E) protein is Polyribonucleotide nucleotidyltransferase.